Consider the following 104-residue polypeptide: Pyrimidine/purine nucleoside phosphorylase (104 aa).

The protein belongs to the nucleoside phosphorylase PpnP family.

The enzyme catalyses a purine D-ribonucleoside + phosphate = a purine nucleobase + alpha-D-ribose 1-phosphate. It carries out the reaction adenosine + phosphate = alpha-D-ribose 1-phosphate + adenine. It catalyses the reaction cytidine + phosphate = cytosine + alpha-D-ribose 1-phosphate. The catalysed reaction is guanosine + phosphate = alpha-D-ribose 1-phosphate + guanine. The enzyme catalyses inosine + phosphate = alpha-D-ribose 1-phosphate + hypoxanthine. It carries out the reaction thymidine + phosphate = 2-deoxy-alpha-D-ribose 1-phosphate + thymine. It catalyses the reaction uridine + phosphate = alpha-D-ribose 1-phosphate + uracil. The catalysed reaction is xanthosine + phosphate = alpha-D-ribose 1-phosphate + xanthine. Catalyzes the phosphorolysis of diverse nucleosides, yielding D-ribose 1-phosphate and the respective free bases. Can use uridine, adenosine, guanosine, cytidine, thymidine, inosine and xanthosine as substrates. Also catalyzes the reverse reactions. The sequence is that of Pyrimidine/purine nucleoside phosphorylase from Leptospira borgpetersenii serovar Hardjo-bovis (strain L550).